A 274-amino-acid chain; its full sequence is Non-heme haloperoxidase (274 aa).

Positions 22–254 constitute an AB hydrolase-1 domain; the sequence is PIMFHHGWPL…RLKVYPGLSH (233 aa). Catalysis depends on residues serine 95, aspartate 225, and histidine 254.

Belongs to the AB hydrolase superfamily. Bacterial non-heme haloperoxidase / perhydrolase family.

The chain is Non-heme haloperoxidase (thcF) from Rhodococcus erythropolis (Arthrobacter picolinophilus).